The following is a 347-amino-acid chain: Phenylalanine--tRNA ligase alpha subunit (347 aa).

A Mg(2+)-binding site is contributed by glutamate 265.

The protein belongs to the class-II aminoacyl-tRNA synthetase family. Phe-tRNA synthetase alpha subunit type 1 subfamily. Tetramer of two alpha and two beta subunits. Requires Mg(2+) as cofactor.

The protein resides in the cytoplasm. It carries out the reaction tRNA(Phe) + L-phenylalanine + ATP = L-phenylalanyl-tRNA(Phe) + AMP + diphosphate + H(+). This chain is Phenylalanine--tRNA ligase alpha subunit, found in Wolbachia pipientis wMel.